A 372-amino-acid polypeptide reads, in one-letter code: Carbamoyl phosphate synthase small chain (372 aa).

A CPSase region spans residues 1-186 (MTYCKRGTEG…IHQNNSPDII (186 aa)). 3 residues coordinate L-glutamine: S52, G233, and G235. The 188-residue stretch at 185 to 372 (IIVLVDCGIK…KKMVIKDEGN (188 aa)) folds into the Glutamine amidotransferase type-1 domain. C261 serves as the catalytic Nucleophile. L-glutamine is bound by residues L262, Q265, N303, G305, and Y306. Active-site residues include H345 and E347.

It belongs to the CarA family. As to quaternary structure, composed of two chains; the small (or glutamine) chain promotes the hydrolysis of glutamine to ammonia, which is used by the large (or ammonia) chain to synthesize carbamoyl phosphate. Tetramer of heterodimers (alpha,beta)4.

It catalyses the reaction hydrogencarbonate + L-glutamine + 2 ATP + H2O = carbamoyl phosphate + L-glutamate + 2 ADP + phosphate + 2 H(+). The catalysed reaction is L-glutamine + H2O = L-glutamate + NH4(+). Its pathway is amino-acid biosynthesis; L-arginine biosynthesis; carbamoyl phosphate from bicarbonate: step 1/1. The protein operates within pyrimidine metabolism; UMP biosynthesis via de novo pathway; (S)-dihydroorotate from bicarbonate: step 1/3. Small subunit of the glutamine-dependent carbamoyl phosphate synthetase (CPSase). CPSase catalyzes the formation of carbamoyl phosphate from the ammonia moiety of glutamine, carbonate, and phosphate donated by ATP, constituting the first step of 2 biosynthetic pathways, one leading to arginine and/or urea and the other to pyrimidine nucleotides. The small subunit (glutamine amidotransferase) binds and cleaves glutamine to supply the large subunit with the substrate ammonia. This is Carbamoyl phosphate synthase small chain from Metallosphaera sedula (strain ATCC 51363 / DSM 5348 / JCM 9185 / NBRC 15509 / TH2).